Here is a 340-residue protein sequence, read N- to C-terminus: DnaJ homolog subfamily B member 1 (340 aa).

Residues 2–70 (GKDYYQTLGL…REIFDRYGEE (69 aa)) form the J domain. The disordered stretch occupies residues 68-90 (GEEGLKGSGPSGGSSGGTNGTSF). Gly residues predominate over residues 73–86 (KGSGPSGGSSGGTN). Thr307 is modified (phosphothreonine).

As to quaternary structure, interacts with DNAJC3. Interacts with HSF1 (via transactivation domain); this interaction results in the inhibition of heat shock- and HSF1-induced transcriptional activity during the attenuation and recovery phase period of the heat shock response. Interacts with BAG3.

The protein localises to the cytoplasm. It is found in the nucleus. Its subcellular location is the nucleolus. Its function is as follows. Interacts with HSP70 and can stimulate its ATPase activity. Stimulates the association between HSC70 and HIP. Negatively regulates heat shock-induced HSF1 transcriptional activity during the attenuation and recovery phase period of the heat shock response. Stimulates ATP hydrolysis and the folding of unfolded proteins mediated by HSPA1A/B (in vitro). In Bos taurus (Bovine), this protein is DnaJ homolog subfamily B member 1 (DNAJB1).